Consider the following 401-residue polypeptide: Acetate kinase (401 aa).

A Mg(2+)-binding site is contributed by Asn7. Lys14 lines the ATP pocket. Substrate is bound at residue Arg92. Catalysis depends on Asp149, which acts as the Proton donor/acceptor. ATP-binding positions include 209–213 (HLGNG), 283–285 (DAR), and 331–335 (GLGEN). Glu385 contacts Mg(2+).

Belongs to the acetokinase family. Homodimer. The cofactor is Mg(2+). It depends on Mn(2+) as a cofactor.

It localises to the cytoplasm. The catalysed reaction is acetate + ATP = acetyl phosphate + ADP. The protein operates within metabolic intermediate biosynthesis; acetyl-CoA biosynthesis; acetyl-CoA from acetate: step 1/2. Its function is as follows. Catalyzes the formation of acetyl phosphate from acetate and ATP. Can also catalyze the reverse reaction. In Helicobacter pylori (strain Shi470), this protein is Acetate kinase.